Reading from the N-terminus, the 294-residue chain is MANNMREIKSRIKSINQMRQITKAMKLISASKLKKARAQLEETLPYYNKVKETIADILAHSAEVESRFFDIREEKEGKKKAYIVMAGDKGLAGGYNSNIFKLTEHEIGDNKENALLLVAGTTGRSYFSRKEYHVHTEFDYAVQNPTVFRAREITEIILDLYNKQEVDEVYIVYTQMISAISLEPRILKLLPIEISALREDVKADEIVLDQRLKYEPSVTEVLNVLIPKYIKGIMYGTFVEAFTSEQNARMTAMDNATKNADEMLQKLNLYYNRARQATITQEISEIVGGASALE.

Belongs to the ATPase gamma chain family. F-type ATPases have 2 components, CF(1) - the catalytic core - and CF(0) - the membrane proton channel. CF(1) has five subunits: alpha(3), beta(3), gamma(1), delta(1), epsilon(1). CF(0) has three main subunits: a, b and c.

It localises to the cell membrane. Produces ATP from ADP in the presence of a proton gradient across the membrane. The gamma chain is believed to be important in regulating ATPase activity and the flow of protons through the CF(0) complex. This chain is ATP synthase gamma chain, found in Ruminiclostridium cellulolyticum (strain ATCC 35319 / DSM 5812 / JCM 6584 / H10) (Clostridium cellulolyticum).